The sequence spans 317 residues: L-lactate dehydrogenase (317 aa).

NAD(+) is bound by residues Val-18, Asp-39, Lys-44, Tyr-69, and 83-84 (GA). Substrate is bound by residues Gln-86, Arg-92, and 124-127 (NPVD). NAD(+) is bound by residues 122 to 124 (VTN) and Ser-147. 152-155 (DTAR) contributes to the substrate binding site. Residues Arg-157 and His-172 each coordinate beta-D-fructose 1,6-bisphosphate. The active-site Proton acceptor is His-179. A Phosphotyrosine modification is found at Tyr-225. Position 234 (Thr-234) interacts with substrate.

It belongs to the LDH/MDH superfamily. LDH family. As to quaternary structure, homotetramer.

It localises to the cytoplasm. The enzyme catalyses (S)-lactate + NAD(+) = pyruvate + NADH + H(+). Its pathway is fermentation; pyruvate fermentation to lactate; (S)-lactate from pyruvate: step 1/1. Allosterically activated by fructose 1,6-bisphosphate (FBP). Its function is as follows. Catalyzes the conversion of lactate to pyruvate. The sequence is that of L-lactate dehydrogenase from Acetivibrio thermocellus (strain ATCC 27405 / DSM 1237 / JCM 9322 / NBRC 103400 / NCIMB 10682 / NRRL B-4536 / VPI 7372) (Clostridium thermocellum).